Here is a 215-residue protein sequence, read N- to C-terminus: Protein C' (215 aa).

Disordered regions lie at residues 12-34 and 51-71; these read MPSF…SRSR and SEGT…QALP. Positions 15-22 are involved in self-degradation and in host STAT1 degradation; that stretch reads FLKKILKL. Polar residues predominate over residues 51–65; it reads SEGTEAGSTTPSTLP.

It belongs to the respirovirus protein C family. In terms of assembly, the different isoforms interact (via C-terminus) with unphosphorylated and phosphorylated human STAT1 (via N-terminus), favoring the formation of parallel STAT1 homodimers. The different isoforms do not interact with host STAT2. C protein interacts with L protein; this interaction has an inhibitory effect on viral transcription and replication. Y1 and Y2 proteins are produced not only by alternative initiation, but also by proteolytic cleavage of C'. Only alternative initiation is detected in vitro, whereas in vivo cleavage seems to be predominant.

Its subcellular location is the host cytoplasm. Functionally, the different products prevent the establishment of cellular antiviral state by blocking the interferon-alpha/beta (IFN-alpha/beta) and IFN-gamma signaling pathways. They inhibit IFN-alpha/beta induced tyrosine phosphorylation of STAT1 and STAT2. Blocking the IFN-alpha/beta pathway requires binding to STAT1 in the cytoplasm. They inhibit IFN-gamma induced serine phosphorylation of STAT1. Block the IFN-gamma pathway by binding to and stabilizing the parallel form of the STAT1 dimer, further inducing high-molecular-weight complex formation and inhibition of transcription by IFN-gamma. May also have a role in preventing the cell to enter apoptosis. Modulate regulation of viral transcription and replication. Overexpression inhibits the viral RNA polymerase. The absence of all C', C, Y1 and Y2 proteins leads to viral delayed growth. Plays an important role in virion particles release. Modulates virion shape. This chain is Protein C' (P/V/C), found in Sendai virus (strain Harris) (SeV).